Reading from the N-terminus, the 422-residue chain is SH2 domain-containing protein 4A (422 aa).

A phosphoserine mark is found at serine 117 and serine 123. 2 disordered regions span residues 141–190 and 202–282; these read PQNV…EDEK and SEWQ…VIRT. Composition is skewed to basic and acidic residues over residues 163 to 190 and 212 to 231; these read TKKD…EDEK and KAAD…DYKR. Phosphoserine is present on serine 233. One can recognise an SH2 domain in the interval 316–408; the sequence is WFHGILTLKK…LGKELLLFPC (93 aa).

In terms of assembly, interacts with ESR1.

It localises to the cytoplasm. Inhibits estrogen-induced cell proliferation by competing with PLCG for binding to ESR1, blocking the effect of estrogen on PLCG and repressing estrogen-induced proliferation. May play a role in T-cell development and function. The polypeptide is SH2 domain-containing protein 4A (Sh2d4a) (Rattus norvegicus (Rat)).